Reading from the N-terminus, the 429-residue chain is Ribosomal RNA small subunit methyltransferase B (429 aa).

Residues 254-260 (CAAPGGK), Asp277, Asp303, and Asp322 contribute to the S-adenosyl-L-methionine site. The active-site Nucleophile is the Cys375. A disordered region spans residues 397–419 (ALSETGTPDQPGQQNLPGGEEGD). Residues 400–412 (ETGTPDQPGQQNL) are compositionally biased toward polar residues.

The protein belongs to the class I-like SAM-binding methyltransferase superfamily. RsmB/NOP family.

The protein localises to the cytoplasm. The enzyme catalyses cytidine(967) in 16S rRNA + S-adenosyl-L-methionine = 5-methylcytidine(967) in 16S rRNA + S-adenosyl-L-homocysteine + H(+). In terms of biological role, specifically methylates the cytosine at position 967 (m5C967) of 16S rRNA. The sequence is that of Ribosomal RNA small subunit methyltransferase B from Salmonella newport (strain SL254).